The following is a 191-amino-acid chain: Ankyrin repeat domain-containing protein 22 (191 aa).

4 ANK repeats span residues 39 to 68, 72 to 100, 101 to 130, and 134 to 163; these read NGDTPLICACRRGHVRIVSFLLRRNANVNL, KERTCLHYAVKKKFTFIDYLLIILLMPVL, LIGYFLMVSKTKQNEALVRMLLDAGVEVNA, and YGCTALHYACEMKNQSLIPLLLEARADPTI.

This is Ankyrin repeat domain-containing protein 22 (ANKRD22) from Homo sapiens (Human).